We begin with the raw amino-acid sequence, 362 residues long: 3-isopropylmalate dehydrogenase (362 aa).

77–88 (GPKWGTGSVRPE) provides a ligand contact to NAD(+). The substrate site is built by arginine 95, arginine 105, arginine 134, and aspartate 223. Aspartate 223, aspartate 248, and aspartate 252 together coordinate Mg(2+). 287-298 (GSAPDLPKGKVN) provides a ligand contact to NAD(+).

The protein belongs to the isocitrate and isopropylmalate dehydrogenases family. Homodimer. Mg(2+) serves as cofactor. The cofactor is Mn(2+).

It is found in the cytoplasm. The catalysed reaction is (2R,3S)-3-isopropylmalate + NAD(+) = 4-methyl-2-oxopentanoate + CO2 + NADH. Its pathway is amino-acid biosynthesis; L-leucine biosynthesis; L-leucine from 3-methyl-2-oxobutanoate: step 3/4. Catalyzes the oxidation of 3-carboxy-2-hydroxy-4-methylpentanoate (3-isopropylmalate) to 3-carboxy-4-methyl-2-oxopentanoate. The product decarboxylates to 4-methyl-2 oxopentanoate. This chain is 3-isopropylmalate dehydrogenase (LEU2), found in Zygosaccharomyces rouxii (strain ATCC 2623 / CBS 732 / NBRC 1130 / NCYC 568 / NRRL Y-229).